A 534-amino-acid polypeptide reads, in one-letter code: Dual specificity calcium/calmodulin-dependent 3',5'-cyclic nucleotide phosphodiesterase 1B (534 aa).

The interval Met1 to Glu21 is disordered. Phosphoserine is present on residues Ser7 and Ser14. Calmodulin-binding stretches follow at residues Ser27–Asn47 and Glu116–Arg139. One can recognise a PDEase domain in the interval Val144 to Gly501. Residue His221 is the Proton donor of the active site. The Zn(2+) site is built by His225, His261, Asp262, and Asp368. Asp262 is a binding site for Mg(2+). 2 disordered regions span residues Val442 to Asn473 and Trp494 to Asp534. Polar residues predominate over residues Lys453–Gln462. Phosphoserine occurs at positions 464 and 512.

This sequence belongs to the cyclic nucleotide phosphodiesterase family. PDE1 subfamily. Homodimer. Zn(2+) serves as cofactor. Requires Mg(2+) as cofactor. In terms of tissue distribution, expressed in central nervous system regions. Most abundant in basal ganglia. Also found in kidney papilla and adrenal medulla.

The protein resides in the cytoplasm. Its subcellular location is the cytosol. It catalyses the reaction a nucleoside 3',5'-cyclic phosphate + H2O = a nucleoside 5'-phosphate + H(+). It carries out the reaction 3',5'-cyclic GMP + H2O = GMP + H(+). The enzyme catalyses 3',5'-cyclic AMP + H2O = AMP + H(+). With respect to regulation, type I PDE are activated by the binding of calmodulin in the presence of Ca(2+). Its function is as follows. Cyclic nucleotide phosphodiesterase with a dual specificity for the second messengers cAMP and cGMP, which are key regulators of many important physiological processes. Has a preference for cGMP as a substrate. The protein is Dual specificity calcium/calmodulin-dependent 3',5'-cyclic nucleotide phosphodiesterase 1B of Bos taurus (Bovine).